The sequence spans 1219 residues: Disease resistance-like protein DSC1 (1219 aa).

The TIR domain maps to 9-176; it reads AEFDVFLSFR…EIAVDTFKKL (168 aa). Glutamate 83 is an active-site residue. Residues 197-446 form the NB-ARC domain; the sequence is LEKLLSWEDL…DIACFFRSEN (250 aa). Position 216–222 (216–222) interacts with ATP; the sequence is GMVGIGK. LRR repeat units lie at residues 468–493, 538–563, 597–619, 620–642, 665–689, 690–713, 733–757, 759–780, 804–827, 854–877, and 878–899; these read LVDKCLITLSDNRIEMHDMLQTMAKE, TDKIRGIFLDTSKLRAMRLSAKAFQG, PNELTYLHWHGYPLQSIPLDFDP, KNLVDLKLPHSQLEEIWDDEKDV, AHNLERLNLEGCTSLKKLPSTINCL, EKLIYLNLRDCTSLRSLPKGIKTQ, SENVEVLLLDGTVIKSLPESIQTFR, LALLNLKNCKKLKHLSSDLYKL, MESLEILLMDDTSITEMPKMMHLS, CSRLTDLYLSRCSLYKLPDNIGGL, and SSLQSLCLSGNNIENLPESFNQ.

This sequence belongs to the disease resistance NB-LRR family. In terms of assembly, interacts with CAMTA3 and DSC2.

It carries out the reaction NAD(+) + H2O = ADP-D-ribose + nicotinamide + H(+). In terms of biological role, TIR-NB-LRR receptor-like protein involved in plant defense. Acts as a trigger of hypersensitive response (HR). Functions as a guard of CAMTA3, a negative regulator of immunity, during pathogen infection. The sequence is that of Disease resistance-like protein DSC1 from Arabidopsis thaliana (Mouse-ear cress).